The primary structure comprises 255 residues: 1-(5-phosphoribosyl)-5-[(5-phosphoribosylamino)methylideneamino] imidazole-4-carboxamide isomerase (255 aa).

The Proton acceptor role is filled by D8. The Proton donor role is filled by D129.

This sequence belongs to the HisA/HisF family.

It localises to the cytoplasm. It catalyses the reaction 1-(5-phospho-beta-D-ribosyl)-5-[(5-phospho-beta-D-ribosylamino)methylideneamino]imidazole-4-carboxamide = 5-[(5-phospho-1-deoxy-D-ribulos-1-ylimino)methylamino]-1-(5-phospho-beta-D-ribosyl)imidazole-4-carboxamide. Its pathway is amino-acid biosynthesis; L-histidine biosynthesis; L-histidine from 5-phospho-alpha-D-ribose 1-diphosphate: step 4/9. The polypeptide is 1-(5-phosphoribosyl)-5-[(5-phosphoribosylamino)methylideneamino] imidazole-4-carboxamide isomerase (Prochlorococcus marinus (strain MIT 9211)).